A 393-amino-acid chain; its full sequence is Argininosuccinate synthase (393 aa).

ATP-binding positions include 7 to 15 and alanine 34; that span reads AYSGGLDTS. Residues tyrosine 85 and serine 90 each contribute to the L-citrulline site. Glycine 115 contributes to the ATP binding site. L-aspartate-binding residues include threonine 117, asparagine 121, and aspartate 122. Asparagine 121 lines the L-citrulline pocket. Positions 125, 176, 185, 261, and 273 each coordinate L-citrulline.

The protein belongs to the argininosuccinate synthase family. Type 1 subfamily. As to quaternary structure, homotetramer.

Its subcellular location is the cytoplasm. It carries out the reaction L-citrulline + L-aspartate + ATP = 2-(N(omega)-L-arginino)succinate + AMP + diphosphate + H(+). The protein operates within amino-acid biosynthesis; L-arginine biosynthesis; L-arginine from L-ornithine and carbamoyl phosphate: step 2/3. This is Argininosuccinate synthase from Ehrlichia canis (strain Jake).